Here is a 354-residue protein sequence, read N- to C-terminus: Protein RecA (354 aa).

An ATP-binding site is contributed by 65-72 (GPESSGKT).

The protein belongs to the RecA family.

The protein localises to the cytoplasm. Functionally, can catalyze the hydrolysis of ATP in the presence of single-stranded DNA, the ATP-dependent uptake of single-stranded DNA by duplex DNA, and the ATP-dependent hybridization of homologous single-stranded DNAs. It interacts with LexA causing its activation and leading to its autocatalytic cleavage. This chain is Protein RecA, found in Pseudomonas syringae pv. syringae (strain B728a).